The following is a 169-amino-acid chain: Putative ribonuclease VapC50 (169 aa).

In terms of biological role, toxic component of a type II toxin-antitoxin (TA) system. An RNase. The cognate antitoxin is VapB50. This Mycobacterium tuberculosis (strain ATCC 25618 / H37Rv) protein is Putative ribonuclease VapC50.